Reading from the N-terminus, the 254-residue chain is tRNA uridine(34) hydroxylase (254 aa).

Residues 123-217 form the Rhodanese domain; the sequence is QDPNVILLDT…YLESIPESES (95 aa). Residue C177 is the Cysteine persulfide intermediate of the active site.

This sequence belongs to the TrhO family.

It catalyses the reaction uridine(34) in tRNA + AH2 + O2 = 5-hydroxyuridine(34) in tRNA + A + H2O. In terms of biological role, catalyzes oxygen-dependent 5-hydroxyuridine (ho5U) modification at position 34 in tRNAs. The chain is tRNA uridine(34) hydroxylase from Legionella pneumophila (strain Paris).